A 472-amino-acid chain; its full sequence is Pyruvate kinase (472 aa).

Arg-33 contributes to the substrate binding site. 3 residues coordinate K(+): Asn-35, Ser-37, and Asp-67. 35-38 is a binding site for ATP; that stretch reads NFSH. ATP contacts are provided by Arg-74 and Lys-155. Position 220 (Glu-220) interacts with Mg(2+). Substrate-binding residues include Gly-243, Asp-244, and Thr-276. A Mg(2+)-binding site is contributed by Asp-244.

It belongs to the pyruvate kinase family. In terms of assembly, homotetramer. Mg(2+) serves as cofactor. The cofactor is K(+).

It carries out the reaction pyruvate + ATP = phosphoenolpyruvate + ADP + H(+). It functions in the pathway carbohydrate degradation; glycolysis; pyruvate from D-glyceraldehyde 3-phosphate: step 5/5. In Mycobacterium intracellulare, this protein is Pyruvate kinase (pyk).